The chain runs to 285 residues: Large ribosomal subunit protein uL2 (285 aa).

The disordered stretch occupies residues 215-285; sequence GRSRHKGIRP…IIRNRKGEQY (71 aa). Positions 256-272 are enriched in basic residues; that stretch reads WGKRHMGVKTRNMKKHS.

This sequence belongs to the universal ribosomal protein uL2 family. Part of the 50S ribosomal subunit. Forms a bridge to the 30S subunit in the 70S ribosome.

In terms of biological role, one of the primary rRNA binding proteins. Required for association of the 30S and 50S subunits to form the 70S ribosome, for tRNA binding and peptide bond formation. It has been suggested to have peptidyltransferase activity; this is somewhat controversial. Makes several contacts with the 16S rRNA in the 70S ribosome. The polypeptide is Large ribosomal subunit protein uL2 (Mycoplasma genitalium (strain ATCC 33530 / DSM 19775 / NCTC 10195 / G37) (Mycoplasmoides genitalium)).